Consider the following 508-residue polypeptide: Photosystem II CP47 reaction center protein (508 aa).

Helical transmembrane passes span alanine 21–serine 36, isoleucine 101–tryptophan 115, glycine 140–phenylalanine 156, isoleucine 203–serine 218, valine 237–valine 252, and tryptophan 457–arginine 472.

Belongs to the PsbB/PsbC family. PsbB subfamily. PSII is composed of 1 copy each of membrane proteins PsbA, PsbB, PsbC, PsbD, PsbE, PsbF, PsbH, PsbI, PsbJ, PsbK, PsbL, PsbM, PsbT, PsbX, PsbY, PsbZ, Psb30/Ycf12, at least 3 peripheral proteins of the oxygen-evolving complex and a large number of cofactors. It forms dimeric complexes. Requires Binds multiple chlorophylls. PSII binds additional chlorophylls, carotenoids and specific lipids. as cofactor.

It localises to the plastid. It is found in the chloroplast thylakoid membrane. One of the components of the core complex of photosystem II (PSII). It binds chlorophyll and helps catalyze the primary light-induced photochemical processes of PSII. PSII is a light-driven water:plastoquinone oxidoreductase, using light energy to abstract electrons from H(2)O, generating O(2) and a proton gradient subsequently used for ATP formation. This is Photosystem II CP47 reaction center protein from Nephroselmis olivacea (Green alga).